The sequence spans 85 residues: UPF0181 protein YPTS_1774 (85 aa).

The span at 57 to 72 (DHDFDEHTESDYRRDD) shows a compositional bias: basic and acidic residues. The tract at residues 57–85 (DHDFDEHTESDYRRDDEPDADDIEDLYEG) is disordered. Positions 73–85 (EPDADDIEDLYEG) are enriched in acidic residues.

This sequence belongs to the UPF0181 family.

The polypeptide is UPF0181 protein YPTS_1774 (Yersinia pseudotuberculosis serotype IB (strain PB1/+)).